The sequence spans 258 residues: Na(+)-translocating NADH-quinone reductase subunit C (258 aa).

The chain crosses the membrane as a helical span at residues 14–34 (LIVVLAVSLICSVIVAGAVVG). Serine 226 is subject to FMN phosphoryl serine.

This sequence belongs to the NqrC family. Composed of six subunits; NqrA, NqrB, NqrC, NqrD, NqrE and NqrF. It depends on FMN as a cofactor.

The protein localises to the cell inner membrane. It carries out the reaction a ubiquinone + n Na(+)(in) + NADH + H(+) = a ubiquinol + n Na(+)(out) + NAD(+). In terms of biological role, NQR complex catalyzes the reduction of ubiquinone-1 to ubiquinol by two successive reactions, coupled with the transport of Na(+) ions from the cytoplasm to the periplasm. NqrA to NqrE are probably involved in the second step, the conversion of ubisemiquinone to ubiquinol. In Neisseria meningitidis serogroup A / serotype 4A (strain DSM 15465 / Z2491), this protein is Na(+)-translocating NADH-quinone reductase subunit C.